The following is a 401-amino-acid chain: Tumor necrosis factor receptor superfamily member 11B (401 aa).

Positions methionine 1–glutamine 21 are cleaved as a signal peptide. TNFR-Cys repeat units follow at residues phenylalanine 24–cysteine 62, cysteine 65–cysteine 105, cysteine 107–cysteine 142, and cysteine 145–cysteine 185. Disulfide bonds link cysteine 41–cysteine 54, cysteine 44–cysteine 62, cysteine 65–cysteine 80, cysteine 83–cysteine 97, cysteine 87–cysteine 105, cysteine 107–cysteine 118, cysteine 124–cysteine 142, and cysteine 145–cysteine 160. Residue asparagine 98 is glycosylated (N-linked (GlcNAc...) asparagine). N-linked (GlcNAc...) asparagine glycans are attached at residues asparagine 152, asparagine 165, and asparagine 178. A disulfide bridge links cysteine 166 with cysteine 185. Death domains lie at aspartate 198 to lysine 269 and isoleucine 270 to leucine 365. The N-linked (GlcNAc...) asparagine glycan is linked to asparagine 289.

In terms of assembly, homodimer. Interacts with TNFSF10 and TNFSF11. In terms of processing, N-glycosylated. Contains sialic acid residues. Post-translationally, the N-terminus is blocked. As to expression, highly expressed in adult lung, heart, kidney, liver, spleen, thymus, prostate, ovary, small intestine, thyroid, lymph node, trachea, adrenal gland, testis, and bone marrow. Detected at very low levels in brain, placenta and skeletal muscle. Highly expressed in fetal kidney, liver and lung.

The protein resides in the secreted. Its function is as follows. Acts as a decoy receptor for TNFSF11/RANKL and thereby neutralizes its function in osteoclastogenesis. Inhibits the activation of osteoclasts and promotes osteoclast apoptosis in vitro. Bone homeostasis seems to depend on the local ratio between TNFSF11 and TNFRSF11B. May also play a role in preventing arterial calcification. May act as decoy receptor for TNFSF10/TRAIL and protect against apoptosis. TNFSF10/TRAIL binding blocks the inhibition of osteoclastogenesis. This is Tumor necrosis factor receptor superfamily member 11B (TNFRSF11B) from Homo sapiens (Human).